Consider the following 115-residue polypeptide: NAD(P)H-quinone oxidoreductase subunit M (115 aa).

It belongs to the complex I NdhM subunit family. In terms of assembly, NDH-1 can be composed of about 15 different subunits; different subcomplexes with different compositions have been identified which probably have different functions.

The protein resides in the cellular thylakoid membrane. The catalysed reaction is a plastoquinone + NADH + (n+1) H(+)(in) = a plastoquinol + NAD(+) + n H(+)(out). It carries out the reaction a plastoquinone + NADPH + (n+1) H(+)(in) = a plastoquinol + NADP(+) + n H(+)(out). In terms of biological role, NDH-1 shuttles electrons from an unknown electron donor, via FMN and iron-sulfur (Fe-S) centers, to quinones in the respiratory and/or the photosynthetic chain. The immediate electron acceptor for the enzyme in this species is believed to be plastoquinone. Couples the redox reaction to proton translocation, and thus conserves the redox energy in a proton gradient. Cyanobacterial NDH-1 also plays a role in inorganic carbon-concentration. The protein is NAD(P)H-quinone oxidoreductase subunit M of Prochlorococcus marinus (strain MIT 9215).